Here is a 228-residue protein sequence, read N- to C-terminus: MAMLLQVALPLLAAVSWGWELNENDDSLAKIIEGCEWTSRQNVISEILLDRYRKYAMYNFFLLDDVCAVHEWNKNLKEPEFSENNEAEDKSPTSAQNTQEHIPGNNFPPPAASNPPVNSSCAKSAKDFFICLSNQLGDPTLNAMLLDNLEVACDPRFSPVSAIQKRNSKYVSKQKFYSWGGKRNNPNVFYPWGGKRNTGRVHRQPKVVIRNPFHAWGGKRNQKDDNVF.

Residues Met1–Gly18 form the signal peptide. The propeptide occupies Trp19–Gln164. The disordered stretch occupies residues Glu80 to Asn118. A glycine amide mark is found at Gly180 and Gly193. Residues Asn197–Ile209 constitute a propeptide that is removed on maturation. A Glycine amide modification is found at Gly217. Residues Asn221–Phe228 constitute a propeptide that is removed on maturation.

It localises to the secreted. Stimulates both fluid secretion by the Malpighian tubules and hindgut contractions. Depolarize the transepithelial voltage of the Malpighian tubules in concentrations of less than 10(-9) M and increase the frequency of hindgut contractions at concentrations above 10(-8) M. This chain is Leucokinins, found in Aedes aegypti (Yellowfever mosquito).